The following is a 318-amino-acid chain: 4-hydroxy-3-methylbut-2-enyl diphosphate reductase (318 aa).

Cys12 lines the [4Fe-4S] cluster pocket. The (2E)-4-hydroxy-3-methylbut-2-enyl diphosphate site is built by His41 and His74. Dimethylallyl diphosphate is bound by residues His41 and His74. The isopentenyl diphosphate site is built by His41 and His74. Cys96 is a [4Fe-4S] cluster binding site. A (2E)-4-hydroxy-3-methylbut-2-enyl diphosphate-binding site is contributed by His124. His124 contacts dimethylallyl diphosphate. An isopentenyl diphosphate-binding site is contributed by His124. Glu126 functions as the Proton donor in the catalytic mechanism. Residue Thr167 coordinates (2E)-4-hydroxy-3-methylbut-2-enyl diphosphate. Position 197 (Cys197) interacts with [4Fe-4S] cluster. 4 residues coordinate (2E)-4-hydroxy-3-methylbut-2-enyl diphosphate: Ser225, Ser226, Asn227, and Ser269. 4 residues coordinate dimethylallyl diphosphate: Ser225, Ser226, Asn227, and Ser269. 4 residues coordinate isopentenyl diphosphate: Ser225, Ser226, Asn227, and Ser269.

Belongs to the IspH family. [4Fe-4S] cluster serves as cofactor.

The catalysed reaction is isopentenyl diphosphate + 2 oxidized [2Fe-2S]-[ferredoxin] + H2O = (2E)-4-hydroxy-3-methylbut-2-enyl diphosphate + 2 reduced [2Fe-2S]-[ferredoxin] + 2 H(+). The enzyme catalyses dimethylallyl diphosphate + 2 oxidized [2Fe-2S]-[ferredoxin] + H2O = (2E)-4-hydroxy-3-methylbut-2-enyl diphosphate + 2 reduced [2Fe-2S]-[ferredoxin] + 2 H(+). It participates in isoprenoid biosynthesis; dimethylallyl diphosphate biosynthesis; dimethylallyl diphosphate from (2E)-4-hydroxy-3-methylbutenyl diphosphate: step 1/1. It functions in the pathway isoprenoid biosynthesis; isopentenyl diphosphate biosynthesis via DXP pathway; isopentenyl diphosphate from 1-deoxy-D-xylulose 5-phosphate: step 6/6. Catalyzes the conversion of 1-hydroxy-2-methyl-2-(E)-butenyl 4-diphosphate (HMBPP) into a mixture of isopentenyl diphosphate (IPP) and dimethylallyl diphosphate (DMAPP). Acts in the terminal step of the DOXP/MEP pathway for isoprenoid precursor biosynthesis. This Francisella tularensis subsp. holarctica (strain LVS) protein is 4-hydroxy-3-methylbut-2-enyl diphosphate reductase.